We begin with the raw amino-acid sequence, 816 residues long: Leucine--tRNA ligase (816 aa).

The short motif at 40 to 51 is the 'HIGH' region element; it reads SYPSGSQLHAGH. The 'KMSKS' region signature appears at 576–580; it reads KMSKS. Position 579 (lysine 579) interacts with ATP.

The protein belongs to the class-I aminoacyl-tRNA synthetase family.

It localises to the cytoplasm. The catalysed reaction is tRNA(Leu) + L-leucine + ATP = L-leucyl-tRNA(Leu) + AMP + diphosphate. The polypeptide is Leucine--tRNA ligase (Clostridium perfringens (strain ATCC 13124 / DSM 756 / JCM 1290 / NCIMB 6125 / NCTC 8237 / Type A)).